A 293-amino-acid polypeptide reads, in one-letter code: Movement protein BC1 (293 aa).

This sequence belongs to the begomovirus movement protein BC1 family. In terms of assembly, binds to dimeric supercoiled plasmid DNA. In terms of processing, phosphorylated.

The protein localises to the host cell membrane. Its subcellular location is the host microsome membrane. The protein resides in the host endoplasmic reticulum membrane. Functionally, transports viral genome to neighboring plant cells directly through plasmosdesmata, without any budding. The movement protein allows efficient cell to cell propagation, by bypassing the host cell wall barrier. Begomovirus genome is shuttled out of nucleus by Nuclear shuttle protein (NSP) and the movement protein transports the DNA-NSP complex to cell plasmodesmata and facilitates further movement across the cell wall. The protein is Movement protein BC1 of Macroptilium lathyroides (Lima bean).